Here is a 325-residue protein sequence, read N- to C-terminus: Cytosolic Fe-S cluster assembly factor Nubp1 homolog (325 aa).

The interval 1–26 is disordered; that stretch reads MSSGADVPSDAPAHCPGTQSDDAGKA. Positions 15, 29, 32, and 38 each coordinate [4Fe-4S] cluster. 68–75 is a binding site for ATP; sequence GKGGVGKS. Cysteine 243 and cysteine 246 together coordinate [4Fe-4S] cluster.

Belongs to the Mrp/NBP35 ATP-binding proteins family. NUBP1/NBP35 subfamily. As to quaternary structure, heterotetramer of 2 Nubp1 and 2 Nubp2 chains. Requires [4Fe-4S] cluster as cofactor.

It localises to the cytoplasm. In terms of biological role, component of the cytosolic iron-sulfur (Fe/S) protein assembly (CIA) machinery. Required for maturation of extramitochondrial Fe-S proteins. The Nubp1-Nubp2 heterotetramer forms a Fe-S scaffold complex, mediating the de novo assembly of an Fe-S cluster and its transfer to target apoproteins. This Anopheles gambiae (African malaria mosquito) protein is Cytosolic Fe-S cluster assembly factor Nubp1 homolog.